The chain runs to 555 residues: Transmembrane protein 87A (555 aa).

A signal peptide spans 1-21; it reads MAVAAWLQVSPVIFLLLGAQP. The Lumenal portion of the chain corresponds to 22–225; that stretch reads FPLSFLGAGP…YEYLTLEDYP (204 aa). Intrachain disulfides connect Cys-74/Cys-128 and Cys-89/Cys-431. N-linked (GlcNAc...) asparagine glycosylation is found at Asn-79, Asn-157, and Asn-160. The chain crosses the membrane as a helical span at residues 226–246; it reads LMIFFMVMCIVYVLFGVLWLA. At 247–257 the chain is on the cytoplasmic side; that stretch reads WSACYWRDLLR. Residues 258–278 traverse the membrane as a helical segment; that stretch reads IQFWIGAVIFLGMFEKAVFYA. The Lumenal segment spans residues 279-305; sequence EFQNIRYKGESVQNALVLAELLSAVKR. A helical membrane pass occupies residues 306-322; that stretch reads SLARTLVIIVSLGYGIV. Residues 323-325 are Cytoplasmic-facing; that stretch reads KPR. The chain crosses the membrane as a helical span at residues 326 to 346; it reads LGVTLHKVVVAGALYLLFSGM. At 347 to 361 the chain is on the lumenal side; it reads EGVLRVTGAQTDLAS. Residues 362-382 traverse the membrane as a helical segment; that stretch reads LAFIPLAFLDTALCWWIFISL. Residues 383–403 lie on the Cytoplasmic side of the membrane; it reads TQTMKLLKLRRNIVKLSLYRH. The chain crosses the membrane as a helical span at residues 404–424; the sequence is FTNTLILAVAASIVFIIWTTM. The Lumenal portion of the chain corresponds to 425 to 437; that stretch reads KFRIVTCQSDWRE. Residues 438-458 form a helical membrane-spanning segment; that stretch reads LWVDDAIWRLLFSMILFVIMI. Residues 459–555 lie on the Cytoplasmic side of the membrane; the sequence is LWRPSANNQR…ITHFERSKME (97 aa). The interval 491–515 is disordered; sequence SFEGMKMRSTKQEPNGTSKVNKAQE. Polar residues predominate over residues 502–511; the sequence is QEPNGTSKVN. Ser-540 is subject to Phosphoserine.

The protein belongs to the LU7TM family. TMEM87 subfamily. May interact with STOML3; STOML3 potentiates the mechanosensitive ion channel activity associated with TMEM87A. As to expression, highly expressed in sensory neurons responsive to mechanical force.

It localises to the cell membrane. The protein resides in the golgi apparatus membrane. It is found in the cell projection. Its subcellular location is the ruffle. In terms of biological role, potential monoatomic ion channel gated by mechanical force, implicated in normal touch sensitivity through the generation of mechanically activated currents. However, a direct channel activity is debated and an alternative could be that it functions as a chaperone for an unidentified mechanosensitive ion channel. Could also be involved in cell mechanosensitivity regulating cell adhesion and migration. May also be involved in retrograde transport from endosomes to the trans-Golgi network (TGN). The protein is Transmembrane protein 87A of Mus musculus (Mouse).